The sequence spans 295 residues: Protein PAR32 (295 aa).

Ala-2 carries the post-translational modification N-acetylalanine. Phosphoserine occurs at positions 36, 39, 47, 123, 138, 141, and 147. Over residues 134 to 153 (SATRSHQSLHATTSSPNNNA) the composition is skewed to polar residues. Disordered stretches follow at residues 134–156 (SATRSHQSLHATTSSPNNNAPIV) and 217–295 (TSKK…TMFN). Basic residues predominate over residues 217-227 (TSKKPKNKLKG). Ser-246 carries the phosphoserine modification. Positions 246 to 256 (SPKSSRNTINH) are enriched in polar residues. Positions 265-274 (KFNLKDDNGK) are enriched in basic and acidic residues. A compositionally biased stretch (basic residues) spans 275-284 (EKKKKKKKKS). A compositionally biased stretch (low complexity) spans 285-295 (GFFSSLKTMFN).

Post-translationally, hyperphosphorylated after treatment with rapamycin in a TAP42-dependent manner.

It localises to the cytoplasm. Functionally, involved in resistance to cisplatin. The sequence is that of Protein PAR32 (PAR32) from Saccharomyces cerevisiae (strain ATCC 204508 / S288c) (Baker's yeast).